The primary structure comprises 177 residues: Large ribosomal subunit protein uL6 (177 aa).

The protein belongs to the universal ribosomal protein uL6 family. In terms of assembly, part of the 50S ribosomal subunit.

Its function is as follows. This protein binds to the 23S rRNA, and is important in its secondary structure. It is located near the subunit interface in the base of the L7/L12 stalk, and near the tRNA binding site of the peptidyltransferase center. In Neisseria gonorrhoeae (strain ATCC 700825 / FA 1090), this protein is Large ribosomal subunit protein uL6.